A 721-amino-acid polypeptide reads, in one-letter code: Procollagen-lysine,2-oxoglutarate 5-dioxygenase (721 aa).

Positions Met-1 to Ala-21 are cleaved as a signal peptide. N-linked (GlcNAc...) asparagine glycans are attached at residues Asn-504, Asn-530, and Asn-536. The Fe2OG dioxygenase domain occupies Asn-627 to Pro-721. Fe cation is bound by residues His-650 and Asp-652. The N-linked (GlcNAc...) asparagine glycan is linked to Asn-680. His-702 contributes to the Fe cation binding site. Residue Asn-709 is glycosylated (N-linked (GlcNAc...) asparagine). Position 712 (Arg-712) interacts with 2-oxoglutarate.

L-ascorbate serves as cofactor. The cofactor is Fe(2+).

The protein localises to the endoplasmic reticulum. It is found in the secreted. Its subcellular location is the extracellular space. It catalyses the reaction L-lysyl-[collagen] + 2-oxoglutarate + O2 = (5R)-5-hydroxy-L-lysyl-[collagen] + succinate + CO2. Functionally, forms hydroxylysine residues in collagen type IV. Required for the secretion of collagen type IV (vkg) from haemocytes, fat body and follicle cells. The protein is Procollagen-lysine,2-oxoglutarate 5-dioxygenase of Drosophila melanogaster (Fruit fly).